The primary structure comprises 123 residues: Protein Wnt-7 (123 aa).

A lipid anchor (O-palmitoleoyl serine; by PORCN) is attached at Ser-1. N-linked (GlcNAc...) asparagine glycans are attached at residues Asn-79 and Asn-90. An intrachain disulfide couples Cys-89 to Cys-104.

It belongs to the Wnt family. Post-translationally, palmitoleoylation is required for efficient binding to frizzled receptors. Depalmitoleoylation leads to Wnt signaling pathway inhibition.

Its subcellular location is the secreted. It is found in the extracellular space. It localises to the extracellular matrix. Its function is as follows. Ligand for members of the frizzled family of seven transmembrane receptors. Probable developmental protein. May be a signaling molecule which affects the development of discrete regions of tissues. Is likely to signal over only few cell diameters. The polypeptide is Protein Wnt-7 (WNT-7) (Strongylocentrotus purpuratus (Purple sea urchin)).